Consider the following 607-residue polypeptide: Frizzled and smoothened-like protein J (607 aa).

The N-terminal stretch at 1–26 is a signal peptide; the sequence is MVSNKNLLPIIYIFFIILYFGDVAKS. Topologically, residues 27-247 are extracellular; the sequence is QYFPLDKGAT…QWRNIYRLSD (221 aa). The FZ domain occupies 32–182; that stretch reads DKGATCQKYR…LSYTNTCENT (151 aa). 3 cysteine pairs are disulfide-bonded: C37–C108, C50–C101, and C127–C179. Residues N63, N133, N155, N164, N190, and N222 are each glycosylated (N-linked (GlcNAc...) asparagine). The helical transmembrane segment at 248 to 268 threads the bilayer; that stretch reads VLSILSCILTLFLVITLGIIN. Residues 269–276 lie on the Cytoplasmic side of the membrane; that stretch reads PKVSRFDK. The chain crosses the membrane as a helical span at residues 277–297; that stretch reads INVMLLSSIFLQAFSGALMTF. Residue N298 is glycosylated (N-linked (GlcNAc...) asparagine). Residues 298–330 lie on the Extracellular side of the membrane; it reads NGTENTLCPEDGRFASYIDRMCVATGFLLHGSS. Residues 331–351 traverse the membrane as a helical segment; that stretch reads LLVVQWWCVLSFEVWFTIFQV. Over 352-358 the chain is Cytoplasmic; the sequence is GKKQKDR. A helical transmembrane segment spans residues 359-379; that stretch reads FIYYLVASLIIAWIPPIVSIS. Residues 380–401 lie on the Extracellular side of the membrane; sequence KNEYSGGPANPFCWLTTFNYRR. The helical transmembrane segment at 402-422 threads the bilayer; the sequence is FAFWLPMGIFLCLGGVFLILL. Residues 423 to 451 are Cytoplasmic-facing; that stretch reads MREIYVIVSGNVQSTKESRFKVLKMEAKP. Residues 452-472 traverse the membrane as a helical segment; sequence IISLIMYFSCLLYLFIYDQWI. Over 473 to 508 the chain is Extracellular; that stretch reads NNHMHVYTDSIPSYALCLLTSTSTNDCLLKAPDITG. Residues 509–529 form a helical membrane-spanning segment; it reads LGYFIYSIRVFGVYAFIIYGI. Residues 530 to 607 lie on the Cytoplasmic side of the membrane; that stretch reads SKKTLQIWKY…VELDSNSDAL (78 aa). The Lys-Thr-X-X-X-Trp motif, mediates interaction with the PDZ domain of Dvl family members motif lies at 532–537; sequence KTLQIW. Positions 559-575 are enriched in low complexity; the sequence is TAKSSNSNNSSTTNNIS. The segment at 559 to 607 is disordered; sequence TAKSSNSNNSSTTNNISVKASSNMEYETRQENENGDSQSVELDSNSDAL. The segment covering 593–607 has biased composition (polar residues); sequence GDSQSVELDSNSDAL.

This sequence belongs to the G-protein coupled receptor Fz/Smo family.

It is found in the membrane. The polypeptide is Frizzled and smoothened-like protein J (fslJ-1) (Dictyostelium discoideum (Social amoeba)).